Consider the following 149-residue polypeptide: uncharacterized protein (149 aa).

This is an uncharacterized protein from Methanocaldococcus jannaschii (strain ATCC 43067 / DSM 2661 / JAL-1 / JCM 10045 / NBRC 100440) (Methanococcus jannaschii).